Here is a 1038-residue protein sequence, read N- to C-terminus: MDPLTKGSCGSQLAQTLLWKAKSSLSFGIQPLQTWPTKDPELESQVNLSVSEDLGCRRGDFSRKHYGSVELLISSDADGAIQRAGRFRVENGSTDESAAALPGTWRRTDVHLENPEYHTRWYFKYFLGQVHQNYIGNDAEKSPFFLSVTLSDQNNQRVPQYRAILWRKTGTQKICLPYSPTKTLSVKSILSAMNLDKFEKGPREIFHPEIQKDLLVLEEQEGSVNFKFGVLFAKDGQLTDDEMFSNEIGSEAFQKFLNLLGDTITLKGWTGYRGGLDTKNNTTGINSVYTVYQGHEVMFHVSTMLPYSKENRQQVERKRHIGNDIVTIVFQEGEESSPAFKPSMIRSHFTHIFALVRYDQQNDNYRLKIFSEESVPLFGPPLPSPPVFTDHQEFRDFLLVKLINGEKATLETPTFAQKRRRTLDMLIRSLYQDLMPDLHKNMLNRRSFSDVLPESPKSARKKEEARQAEFVRIGQALKLKSIVRGDAPSSLAASGMCKKEPWEPQCFCCNFPHEAVCADPWGQALLVSTDAGVLLVDDDLPSVPVFDRTLPVKQIHVLETLDLLVLRADKGKDARLFVFRLSAVQKGLDGRQTGRSRSDCRENKLEKTKGCHLYAINTHHSRELRIVVAIRNKLLLITRKPHNKPSGVPGVSLLSPLSESPVEEFQYIREICLCDSPAVMALVDGPTEESDNLICVAYRHQFDVVNESTGEAFRLHHVEANKVNFVAAIDVYEDGEAGLLLCYNYSCIYKKVCPFNGGSFLLQPSASDFQFCWNQAPYAIVCAFPYLLAFTTDSMEIRLVVNGNLVHTAVVPQLQLVASRSDIYFTAATTVHEGSSGGSSKGASAHTSPQTPPARDTPLFPSSLGEGEIQSKNLYKIPLRNLVGRSIERPLKSPLVSKVITPPTSIGLGVAAIPVTHSLSLSRMEIKEIASRTRRELLGLSDDGGTKTEGAPRAKSKTRKRLEESQGGPKPETVRSASSDRIPSGILESPASEANPEGHNHWASSEQDAGVDKEGSPGSGSSPFQLMASSEEDIIDLK.

K6 and S68 each carry phosphoserine. Residues 214 to 430 (LLVLEEQEGS…RTLDMLIRSL (217 aa)) enclose the Rap-GAP domain. Phosphoserine occurs at positions 449 and 455. In terms of domain architecture, CNH spans 512-824 (PHEAVCADPW…QLVASRSDIY (313 aa)). Disordered regions lie at residues 833–863 (EGSSGGSSKGASAHTSPQTPPARDTPLFPSS) and 937–1038 (LLGL…IDLK). Position 851 is a phosphothreonine (T851). Positions 1019–1028 (SGSSPFQLMA) are enriched in polar residues.

It belongs to the GARNL3 family.

The polypeptide is GTPase-activating Rap/Ran-GAP domain-like protein 3 (Garnl3) (Mus musculus (Mouse)).